The primary structure comprises 562 residues: Glutamine--tRNA ligase (562 aa).

The 'HIGH' region motif lies at 35–45; it reads PEPNGYLHIGH. ATP is bound by residues 36-38 and 42-48; these read EPN and HIGHAKS. L-glutamine contacts are provided by D68 and Y213. ATP contacts are provided by residues T232 and 264–265; that span reads RL. Positions 271-275 match the 'KMSKS' region motif; the sequence is ITSKR.

This sequence belongs to the class-I aminoacyl-tRNA synthetase family. As to quaternary structure, monomer.

Its subcellular location is the cytoplasm. It catalyses the reaction tRNA(Gln) + L-glutamine + ATP = L-glutaminyl-tRNA(Gln) + AMP + diphosphate. The sequence is that of Glutamine--tRNA ligase from Neisseria meningitidis serogroup A / serotype 4A (strain DSM 15465 / Z2491).